Consider the following 122-residue polypeptide: UPF0102 protein XAC0764 (122 aa).

This sequence belongs to the UPF0102 family.

This is UPF0102 protein XAC0764 from Xanthomonas axonopodis pv. citri (strain 306).